A 392-amino-acid chain; its full sequence is Phosphoglycerate kinase (392 aa).

Residues D21–N23, R36, H59–R62, R114, and R147 each bind substrate. Residues K198, E320, and G346–T349 each bind ATP.

It belongs to the phosphoglycerate kinase family. In terms of assembly, monomer.

Its subcellular location is the cytoplasm. It catalyses the reaction (2R)-3-phosphoglycerate + ATP = (2R)-3-phospho-glyceroyl phosphate + ADP. It participates in carbohydrate degradation; glycolysis; pyruvate from D-glyceraldehyde 3-phosphate: step 2/5. The polypeptide is Phosphoglycerate kinase (Nitrosomonas eutropha (strain DSM 101675 / C91 / Nm57)).